The sequence spans 234 residues: Coiled-coil domain-containing protein 194 (234 aa).

A signal peptide spans 1–43; that stretch reads MAEPGPEPGRAWRLLALCGAAVFLAAAAAGGALVAWNLAASTA. A disordered region spans residues 44 to 63; that stretch reads RSPRCPEPEQMNATVRPPDS. Residues 67-171 are a coiled coil; the sequence is VEELRRRLAE…LQRAGAAEAA (105 aa). The interval 194-234 is disordered; it reads GTLRKESRLRPRSGSRTKPSISHRPKSGSTKGCRRPPRDPQ. Positions 203–219 are enriched in basic residues; sequence RPRSGSRTKPSISHRPK.

The chain is Coiled-coil domain-containing protein 194 from Mus musculus (Mouse).